Consider the following 1593-residue polypeptide: Laminin subunit gamma-1 (1593 aa).

The N-terminal stretch at 1–19 (MSLFSCLLLWTLWAACSHG) is a signal peptide. The Laminin N-terminal domain maps to 30–269 (RPQRCMPEFV…AISDFAVGGR (240 aa)). N-linked (GlcNAc...) asparagine glycosylation is found at Asn-44 and Asn-118. Disulfide bonds link Cys-270–Cys-279, Cys-272–Cys-289, Cys-291–Cys-300, Cys-303–Cys-323, Cys-326–Cys-335, Cys-328–Cys-351, Cys-354–Cys-363, Cys-366–Cys-379, Cys-382–Cys-394, Cys-384–Cys-400, Cys-402–Cys-411, Cys-414–Cys-426, Cys-429–Cys-440, Cys-431–Cys-447, Cys-449–Cys-458, and Cys-461–Cys-476. 4 Laminin EGF-like domains span residues 270-325 (CKCN…ECLP), 326-381 (CNCN…RCLS), 382-428 (CGCN…GCRP), and 429-478 (CSCN…GCTP). Positions 505 to 673 (RDDEGWKGKQ…PGTPARWVEK (169 aa)) constitute a Laminin IV type A domain. 3 N-linked (GlcNAc...) asparagine glycosylation sites follow: Asn-560, Asn-634, and Asn-654. 24 disulfide bridges follow: Cys-708–Cys-717, Cys-710–Cys-724, Cys-726–Cys-735, Cys-738–Cys-754, Cys-757–Cys-765, Cys-759–Cys-776, Cys-779–Cys-788, Cys-791–Cys-809, Cys-812–Cys-826, Cys-814–Cys-833, Cys-836–Cys-845, Cys-848–Cys-865, Cys-868–Cys-882, Cys-870–Cys-889, Cys-891–Cys-900, Cys-903–Cys-916, Cys-919–Cys-931, Cys-921–Cys-938, Cys-940–Cys-949, Cys-952–Cys-964, Cys-967–Cys-979, Cys-969–Cys-985, Cys-987–Cys-996, and Cys-999–Cys-1012. Laminin EGF-like domains lie at 708–756 (CNCN…DCKA), 757–811 (CPCP…ACRA), 812–867 (CSCN…KCKP), 868–918 (CKCS…GCER), 919–966 (CNCN…GCKP), and 967–1014 (CDCD…GCQQ). Asn-1006, Asn-1091, Asn-1159, Asn-1189, Asn-1207, Asn-1254, Asn-1364, and Asn-1379 each carry an N-linked (GlcNAc...) asparagine glycan. The tract at residues 1014–1593 (QCPNCYSLVR…CFNTPSLERP (580 aa)) is domain II and I. Residues 1021–1580 (LVRDKVNQQR…ANLNDIKNTL (560 aa)) are a coiled coil.

As to quaternary structure, laminin is a complex glycoprotein, consisting of three different polypeptide chains (alpha, beta, gamma), which are bound to each other by disulfide bonds into a cross-shaped molecule comprising one long and three short arms with globules at each end.

Its subcellular location is the secreted. It is found in the extracellular space. The protein localises to the extracellular matrix. It localises to the basement membrane. In terms of biological role, binding to cells via a high affinity receptor, laminin is thought to mediate the attachment, migration and organization of cells into tissues during embryonic development by interacting with other extracellular matrix components. The protein is Laminin subunit gamma-1 (lamc1) of Danio rerio (Zebrafish).